The chain runs to 297 residues: HTH-type transcriptional regulator ArgP (297 aa).

The 57-residue stretch at 4-60 (PDYRTLQALDAVIRERGFERAAQKLCITQSAVSQRIKQLENMFGQPLLVRTVPPRPT) folds into the HTH lysR-type domain. A DNA-binding region (H-T-H motif) is located at residues 21 to 40 (FERAAQKLCITQSAVSQRIK).

This sequence belongs to the LysR transcriptional regulatory family. As to quaternary structure, homodimer.

Controls the transcription of genes involved in arginine and lysine metabolism. The protein is HTH-type transcriptional regulator ArgP of Citrobacter koseri (strain ATCC BAA-895 / CDC 4225-83 / SGSC4696).